The chain runs to 546 residues: CTP synthase (546 aa).

Positions 1-266 are amidoligase domain; that stretch reads MARYIFITGG…DTEVLDVFGL (266 aa). Serine 13 provides a ligand contact to CTP. Residue serine 13 participates in UTP binding. Residue 14-19 coordinates ATP; sequence SLGKGL. Residue tyrosine 54 participates in L-glutamine binding. Aspartate 71 is an ATP binding site. Residues aspartate 71 and glutamate 140 each contribute to the Mg(2+) site. CTP is bound by residues 147–149, 187–192, and lysine 223; these read DIE and KTKPTQ. UTP contacts are provided by residues 187 to 192 and lysine 223; that span reads KTKPTQ. The Glutamine amidotransferase type-1 domain maps to 293 to 545; it reads NIAIVGKYTG…IGAAKERSRL (253 aa). Alanine 357 contributes to the L-glutamine binding site. Cysteine 384 functions as the Nucleophile; for glutamine hydrolysis in the catalytic mechanism. L-glutamine is bound by residues 385 to 388, glutamate 408, and arginine 473; that span reads FGMQ. Catalysis depends on residues histidine 518 and glutamate 520.

The protein belongs to the CTP synthase family. In terms of assembly, homotetramer.

The catalysed reaction is UTP + L-glutamine + ATP + H2O = CTP + L-glutamate + ADP + phosphate + 2 H(+). It carries out the reaction L-glutamine + H2O = L-glutamate + NH4(+). The enzyme catalyses UTP + NH4(+) + ATP = CTP + ADP + phosphate + 2 H(+). It functions in the pathway pyrimidine metabolism; CTP biosynthesis via de novo pathway; CTP from UDP: step 2/2. Its activity is regulated as follows. Allosterically activated by GTP, when glutamine is the substrate; GTP has no effect on the reaction when ammonia is the substrate. The allosteric effector GTP functions by stabilizing the protein conformation that binds the tetrahedral intermediate(s) formed during glutamine hydrolysis. Inhibited by the product CTP, via allosteric rather than competitive inhibition. Functionally, catalyzes the ATP-dependent amination of UTP to CTP with either L-glutamine or ammonia as the source of nitrogen. Regulates intracellular CTP levels through interactions with the four ribonucleotide triphosphates. This is CTP synthase from Phenylobacterium zucineum (strain HLK1).